Reading from the N-terminus, the 186-residue chain is Protein TRL14 (186 aa).

3 N-linked (GlcNAc...) asparagine; by host glycosylation sites follow: Asn24, Asn64, and Asn72. Residues 143–163 traverse the membrane as a helical segment; it reads HAVWAGVVVSVALIALYMGSH.

The protein belongs to the RL11 family.

It is found in the virion membrane. The chain is Protein TRL14 from Human cytomegalovirus (strain AD169) (HHV-5).